We begin with the raw amino-acid sequence, 739 residues long: Phosphoribosylformylglycinamidine synthase subunit PurL (739 aa).

Residue His-53 is part of the active site. ATP contacts are provided by Tyr-56 and Lys-95. Residue Glu-97 coordinates Mg(2+). Residues 98–101 and Arg-120 each bind substrate; that span reads SHNH. His-99 (proton acceptor) is an active-site residue. Residue Asp-121 coordinates Mg(2+). A substrate-binding site is contributed by Gln-244. Asp-274 is a binding site for Mg(2+). Residue 318–320 coordinates substrate; the sequence is ESQ. ATP contacts are provided by Asp-501 and Gly-538. Asn-539 is a binding site for Mg(2+). Ser-541 contributes to the substrate binding site.

The protein belongs to the FGAMS family. As to quaternary structure, monomer. Part of the FGAM synthase complex composed of 1 PurL, 1 PurQ and 2 PurS subunits.

Its subcellular location is the cytoplasm. It catalyses the reaction N(2)-formyl-N(1)-(5-phospho-beta-D-ribosyl)glycinamide + L-glutamine + ATP + H2O = 2-formamido-N(1)-(5-O-phospho-beta-D-ribosyl)acetamidine + L-glutamate + ADP + phosphate + H(+). The protein operates within purine metabolism; IMP biosynthesis via de novo pathway; 5-amino-1-(5-phospho-D-ribosyl)imidazole from N(2)-formyl-N(1)-(5-phospho-D-ribosyl)glycinamide: step 1/2. Functionally, part of the phosphoribosylformylglycinamidine synthase complex involved in the purines biosynthetic pathway. Catalyzes the ATP-dependent conversion of formylglycinamide ribonucleotide (FGAR) and glutamine to yield formylglycinamidine ribonucleotide (FGAM) and glutamate. The FGAM synthase complex is composed of three subunits. PurQ produces an ammonia molecule by converting glutamine to glutamate. PurL transfers the ammonia molecule to FGAR to form FGAM in an ATP-dependent manner. PurS interacts with PurQ and PurL and is thought to assist in the transfer of the ammonia molecule from PurQ to PurL. The polypeptide is Phosphoribosylformylglycinamidine synthase subunit PurL (Listeria innocua serovar 6a (strain ATCC BAA-680 / CLIP 11262)).